The primary structure comprises 45 residues: uncharacterized protein (45 aa).

A helical transmembrane segment spans residues 5-25 (IFFIFALSGILAACTVGGGVS).

The protein localises to the membrane. This is an uncharacterized protein from Haemophilus influenzae (strain ATCC 51907 / DSM 11121 / KW20 / Rd).